Reading from the N-terminus, the 200-residue chain is Dephospho-CoA kinase (200 aa).

The 197-residue stretch at 4-200 folds into the DPCK domain; it reads VIGLTGGIGS…QKYIKMSHLY (197 aa). ATP is bound at residue 12–17; sequence GSGKTT.

Belongs to the CoaE family.

The protein resides in the cytoplasm. It carries out the reaction 3'-dephospho-CoA + ATP = ADP + CoA + H(+). The protein operates within cofactor biosynthesis; coenzyme A biosynthesis; CoA from (R)-pantothenate: step 5/5. Its function is as follows. Catalyzes the phosphorylation of the 3'-hydroxyl group of dephosphocoenzyme A to form coenzyme A. In Photobacterium profundum (strain SS9), this protein is Dephospho-CoA kinase.